A 222-amino-acid polypeptide reads, in one-letter code: AEFVSQNIDKNCILVDMGSTTTDIIPIVDGKAASNKTDLERLMNNELLYVGSLRTPLSFLSNKIMFKDTITNVSSEYFAITGDISLVLDKITEMDYSCDTPDGKPADKRNSLIRISKVLCSDLNQISADESINIAIEYYKILIDLILENVKKVSEKYGLKNIVITGLGEEILKDALSELTKSNEFNIISIKERYGKDVSLATPSFSVSILLKNELNAKLNRS.

It belongs to the MfnF family.

It catalyses the reaction gamma-L-glutamyltyramine + [5-(aminomethyl)furan-3-yl]methyl diphosphate = (4-{4-[2-(gamma-L-glutamylamino)ethyl]phenoxymethyl}furan-2-yl)methanamine + diphosphate. The protein operates within cofactor biosynthesis; methanofuran biosynthesis. Functionally, catalyzes the condensation between 5-(aminomethyl)-3-furanmethanol diphosphate (F1-PP) and gamma-glutamyltyramine to produce APMF-Glu. In Methanococcus vannielii, this protein is (4-{4-[2-(gamma-L-glutamylamino)ethyl]phenoxymethyl}furan-2-yl)methanamine synthase.